We begin with the raw amino-acid sequence, 259 residues long: Phosphatidate cytidylyltransferase (259 aa).

7 helical membrane-spanning segments follow: residues 31–51, 69–89, 103–123, 129–149, 170–190, 193–213, and 236–256; these read LVIF…CFAI, PLVL…IGLL, FFKS…LIKI, YYLL…YYIG, FLGG…YGIL, FLLG…KSFI, and FDAL…GELN.

This sequence belongs to the CDS family.

It is found in the cell membrane. The enzyme catalyses a 1,2-diacyl-sn-glycero-3-phosphate + CTP + H(+) = a CDP-1,2-diacyl-sn-glycerol + diphosphate. The protein operates within phospholipid metabolism; CDP-diacylglycerol biosynthesis; CDP-diacylglycerol from sn-glycerol 3-phosphate: step 3/3. The protein is Phosphatidate cytidylyltransferase (cdsA) of Aquifex aeolicus (strain VF5).